The sequence spans 319 residues: Beta-xylosidase (319 aa).

Asp14 acts as the Proton acceptor in catalysis. Glu222 functions as the Proton donor in the catalytic mechanism.

Belongs to the glycosyl hydrolase 43 family.

It carries out the reaction Hydrolysis of (1-&gt;4)-beta-D-xylans, to remove successive D-xylose residues from the non-reducing termini.. Functionally, exoxylanase capable of acting on certain xylans and xylooligosaccharides. The protein is Beta-xylosidase (xynB) of Xylanibacter ruminicola (Prevotella ruminicola).